A 1144-amino-acid chain; its full sequence is ATP-dependent helicase/deoxyribonuclease subunit B (1144 aa).

One can recognise a UvrD-like helicase ATP-binding domain in the interval 1-276; that stretch reads MAIRYVFGRA…IDLDRNERPV (276 aa). 8–15 serves as a coordination point for ATP; sequence GRAGRGKS. One can recognise a UvrD-like helicase C-terminal domain in the interval 274–584; it reads RPVLPKVQEI…LVGSIERSKS (311 aa). [4Fe-4S] cluster-binding residues include Cys-784, Cys-1102, Cys-1105, and Cys-1111.

This sequence belongs to the helicase family. AddB/RexB type 1 subfamily. Heterodimer of AddA and AddB. Mg(2+) is required as a cofactor. Requires [4Fe-4S] cluster as cofactor.

Functionally, the heterodimer acts as both an ATP-dependent DNA helicase and an ATP-dependent, dual-direction single-stranded exonuclease. Recognizes the chi site generating a DNA molecule suitable for the initiation of homologous recombination. The AddB subunit has 5' -&gt; 3' nuclease activity but not helicase activity. The sequence is that of ATP-dependent helicase/deoxyribonuclease subunit B from Alkaliphilus oremlandii (strain OhILAs) (Clostridium oremlandii (strain OhILAs)).